The sequence spans 266 residues: MPDKLIEIMAHKRREIAPLIRPVTETELAQLDASRPKPPSFADALRRPDGTLAVISEIKRRSPSAGEIKAGASAVEQARRYRAAGADALSILTDTEFFGGTLADLSDVTTEFRDQRPAPPCLRKDFMVHPVQVAQAREAGASAILIIVRALDDAEIQALYSAAQAAGLDALFEVHHETELERALHHRARIIGVNNRDLAVFKTDLALSERLIPQFPRDVIAVSESGIFTGADARRVHAVGAHAVLVGEALMKAPDPAALIAEFRAR.

Belongs to the TrpC family.

It carries out the reaction 1-(2-carboxyphenylamino)-1-deoxy-D-ribulose 5-phosphate + H(+) = (1S,2R)-1-C-(indol-3-yl)glycerol 3-phosphate + CO2 + H2O. The protein operates within amino-acid biosynthesis; L-tryptophan biosynthesis; L-tryptophan from chorismate: step 4/5. This is Indole-3-glycerol phosphate synthase from Opitutus terrae (strain DSM 11246 / JCM 15787 / PB90-1).